Reading from the N-terminus, the 518-residue chain is Cytochrome P450 709B3 (518 aa).

The chain crosses the membrane as a helical span at residues 3–23 (LISTINLLTIVLLLFVVSKIW). A heme-binding site is contributed by C465.

The protein belongs to the cytochrome P450 family. The cofactor is heme. Highly expressed in rosette leaves and siliques, and at lower levels in flowers.

Its subcellular location is the membrane. Its function is as follows. Plays a role in abscisic acid (ABA) and salt stress response. May regulate the salt stress response independently of well-characterized pathways. Does not function as cytokinin hydroxylase in yeast heterologous system. The protein is Cytochrome P450 709B3 of Arabidopsis thaliana (Mouse-ear cress).